The following is a 313-amino-acid chain: Non-functional target of rapamycin complex subunit LST8-2 (313 aa).

WD repeat units follow at residues M1–S35, Y38–P76, S82–E121, R123–E162, E166–T205, A215–V255, and G258–V297.

The protein belongs to the WD repeat LST8 family.

Its function is as follows. Probable non-functional protein. This chain is Non-functional target of rapamycin complex subunit LST8-2, found in Arabidopsis thaliana (Mouse-ear cress).